The following is a 350-amino-acid chain: Inactive ADP-ribosyltransferase arh2 (350 aa).

The protein belongs to the ADP-ribosylglycohydrolase family.

The protein resides in the cytoplasm. It is found in the myofibril. Its subcellular location is the sarcomere. Functionally, required for myofibril assembly and outgrowth of the cardiac chambers in the developing heart. Appears to be catalytically inactive, showing no activity against O-acetyl-ADP-ribose. This Danio rerio (Zebrafish) protein is Inactive ADP-ribosyltransferase arh2 (adprhl1).